A 125-amino-acid polypeptide reads, in one-letter code: Holo-[acyl-carrier-protein] synthase (125 aa).

Mg(2+) contacts are provided by Asp8 and Glu57.

The protein belongs to the P-Pant transferase superfamily. AcpS family. It depends on Mg(2+) as a cofactor.

It localises to the cytoplasm. It catalyses the reaction apo-[ACP] + CoA = holo-[ACP] + adenosine 3',5'-bisphosphate + H(+). Its function is as follows. Transfers the 4'-phosphopantetheine moiety from coenzyme A to a Ser of acyl-carrier-protein. This is Holo-[acyl-carrier-protein] synthase from Geobacter sp. (strain M21).